Reading from the N-terminus, the 368-residue chain is tRNA-specific 2-thiouridylase MnmA (368 aa).

ATP-binding positions include 11 to 18 and methionine 37; that span reads GMSGGVDS. Residues 97–99 are interaction with target base in tRNA; it reads NPD. Cysteine 102 functions as the Nucleophile in the catalytic mechanism. Cysteine 102 and cysteine 199 are joined by a disulfide. ATP is bound at residue glycine 127. Positions 149-151 are interaction with tRNA; it reads KDQ. The active-site Cysteine persulfide intermediate is the cysteine 199. Residues 311 to 312 form an interaction with tRNA region; that stretch reads RY.

The protein belongs to the MnmA/TRMU family. As to quaternary structure, interacts with TusE.

The protein resides in the cytoplasm. It carries out the reaction S-sulfanyl-L-cysteinyl-[protein] + uridine(34) in tRNA + AH2 + ATP = 2-thiouridine(34) in tRNA + L-cysteinyl-[protein] + A + AMP + diphosphate + H(+). Its function is as follows. Catalyzes the 2-thiolation of uridine at the wobble position (U34) of tRNA(Lys), tRNA(Glu) and tRNA(Gln), leading to the formation of s(2)U34, the first step of tRNA-mnm(5)s(2)U34 synthesis. Sulfur is provided by IscS, via a sulfur-relay system. Binds ATP and its substrate tRNAs. This Klebsiella pneumoniae subsp. pneumoniae (strain ATCC 700721 / MGH 78578) protein is tRNA-specific 2-thiouridylase MnmA.